Reading from the N-terminus, the 143-residue chain is Nucleoside diphosphate kinase (143 aa).

6 residues coordinate ATP: K11, F59, R87, T93, R104, and N114. Residue H117 is the Pros-phosphohistidine intermediate of the active site.

It belongs to the NDK family. In terms of assembly, homotetramer. Mg(2+) is required as a cofactor.

It is found in the cytoplasm. The catalysed reaction is a 2'-deoxyribonucleoside 5'-diphosphate + ATP = a 2'-deoxyribonucleoside 5'-triphosphate + ADP. It catalyses the reaction a ribonucleoside 5'-diphosphate + ATP = a ribonucleoside 5'-triphosphate + ADP. Major role in the synthesis of nucleoside triphosphates other than ATP. The ATP gamma phosphate is transferred to the NDP beta phosphate via a ping-pong mechanism, using a phosphorylated active-site intermediate. The sequence is that of Nucleoside diphosphate kinase from Azotobacter vinelandii (strain DJ / ATCC BAA-1303).